Consider the following 411-residue polypeptide: Basic leucine zipper 10 (411 aa).

Disordered stretches follow at residues 1–36 (MNSI…DEVS), 76–99 (SLPS…DSGN), 140–251 (SVKP…NDLK), and 362–411 (NNFA…KCVD). A compositionally biased stretch (polar residues) spans 24–36 (PDSSKPVTADEVS). The segment covering 89–98 (DSRFRDRDSG) has biased composition (basic and acidic residues). 2 stretches are compositionally biased toward polar residues: residues 146–173 (STSS…TSSL) and 183–193 (SMKQVTSGSSR). Ser196 carries the phosphoserine modification. The segment covering 196 to 206 (SDDEDLDEENE) has biased composition (acidic residues). The region spanning 215–278 (DVKKSRRMLS…DEAAVGNRIL (64 aa)) is the bZIP domain. The tract at residues 217 to 236 (KKSRRMLSNRESARRSRRRK) is basic motif. The Nuclear localization signal motif lies at 219-226 (SRRMLSNR). Residues 243–257 (LETQVNDLKGEHSSL) are leucine-zipper. Positions 368-390 (PSQTSSPLQRIRNGQNHHVTPSA) are enriched in polar residues.

The protein belongs to the bZIP family. In terms of assembly, forms a heterodimer with BZIP1, BZIP2, BZIP9, BZIP11, BZIP44, BZIP53 and BZIP63. Interacts with ABI3 and forms a complex made of ABI3, BZIP53 and BZIP10. Binding with LSD1 leads to cytoplasmic retention. In terms of tissue distribution, expressed in roots, shoots, stems, young leaves, trichomes, hydathodes, siliques, seeds, and flowers, mostly in vascular tissues.

Its subcellular location is the nucleus. It is found in the cytoplasm. Functionally, transcription factor that binds to the C-box-like motif (5'-TGCTGACGTCA-3') and G-box-like motif (5'-CCACGTGGCC-3'), ABRE elements, of gene promoters. Binds to the 5'-ACGT-3' motif of seed storage protein (SSP) encoding gene promoters (e.g. At2S and CRU3) and promotes their expression in seeds when in complex with ABI3 and BZIP53. Involved in the defense responses to the biotrophic pathogen Hyaloperonospora parasitica and oxidative stress responses; mediates positively cell death. Promotes BZIP53-mediated response to hypoosmolarity stress that leads to POX1/PRODH1 accumulation. The protein is Basic leucine zipper 10 (BZIP10) of Arabidopsis thaliana (Mouse-ear cress).